The primary structure comprises 248 residues: Pulmonary surfactant-associated protein A2 (248 aa).

The N-terminal stretch at 1 to 20 (MWLCPLALTLILMAASGAAC) is a signal peptide. The Collagen-like domain maps to 28 to 100 (GSPGIPGTPG…AGERGPPGLP (73 aa)). 4-hydroxyproline is present on residues proline 30, proline 33, proline 36, proline 42, proline 54, proline 57, proline 63, proline 67, and proline 70. The disordered stretch occupies residues 33–101 (PGTPGSHGLP…GERGPPGLPA (69 aa)). The segment covering 42–51 (PGRDGRDGVK) has biased composition (basic and acidic residues). A compositionally biased stretch (pro residues) spans 54–70 (PGPPGPMGPPGETPCPP). Residues 71–82 (GNNGLPGAPGVP) are compositionally biased toward low complexity. A compositionally biased stretch (basic and acidic residues) spans 84–93 (ERGEKGEAGE). The C-type lectin domain occupies 132-248 (MTVGEKVFSS…LYSRLTICEF (117 aa)). 2 disulfides stabilise this stretch: cysteine 155–cysteine 246 and cysteine 224–cysteine 238. Residue asparagine 207 is glycosylated (N-linked (GlcNAc...) asparagine).

It belongs to the SFTPA family. Oligomeric complex of 6 set of homotrimers. In terms of processing, N-acetylated.

The protein localises to the secreted. It is found in the extracellular space. It localises to the extracellular matrix. Its subcellular location is the surface film. Its function is as follows. In presence of calcium ions, it binds to surfactant phospholipids and contributes to lower the surface tension at the air-liquid interface in the alveoli of the mammalian lung and is essential for normal respiration. The sequence is that of Pulmonary surfactant-associated protein A2 (SFTPA2) from Homo sapiens (Human).